A 61-amino-acid chain; its full sequence is Small ribosomal subunit protein uS14 (61 aa).

Zn(2+) is bound by residues Cys24, Cys27, Cys40, and Cys43.

The protein belongs to the universal ribosomal protein uS14 family. Zinc-binding uS14 subfamily. As to quaternary structure, part of the 30S ribosomal subunit. Contacts proteins S3 and S10. It depends on Zn(2+) as a cofactor.

Binds 16S rRNA, required for the assembly of 30S particles and may also be responsible for determining the conformation of the 16S rRNA at the A site. This is Small ribosomal subunit protein uS14 from Coprothermobacter proteolyticus (strain ATCC 35245 / DSM 5265 / OCM 4 / BT).